A 500-amino-acid chain; its full sequence is NAD(P)H-quinone oxidoreductase chain 4, chloroplastic (500 aa).

14 helical membrane-spanning segments follow: residues 4–24 (FPWLTIIVVLPIFAGSSIFFL), 37–57 (ICICLLELLLTTYTFCYHFQL), 84–104 (GLSIGPILLTGFITTLATLAA), 111–129 (SRLFHFLMLAMYSGQIGSF), 134–154 (LLLFFIMWELELIPVYLLLSM), 167–187 (FILYTAGGSIFLLMGIPGMGL), 208–228 (ALEILFYFGFLIAYAVKSPII), 242–262 (HYSTCMLLAGILLKMGAYGLV), 272–292 (AHSIFSPWLMIVGTIQVIYAA), 305–325 (IAYSSVSHMAFIIIGIGSITD), 330–350 (GAILQIISHGFIGAALFFLAG), 374–396 (IFTMFSSFSMASLALPGMSGFVA), 411–431 (FFMPKILITFVMAIGMILTPI), and 462–482 (LFVSICIFLPVIGIGIYPDFV).

Belongs to the complex I subunit 4 family.

The protein resides in the plastid. It is found in the chloroplast thylakoid membrane. It catalyses the reaction a plastoquinone + NADH + (n+1) H(+)(in) = a plastoquinol + NAD(+) + n H(+)(out). The catalysed reaction is a plastoquinone + NADPH + (n+1) H(+)(in) = a plastoquinol + NADP(+) + n H(+)(out). This chain is NAD(P)H-quinone oxidoreductase chain 4, chloroplastic, found in Chloranthus spicatus (Chulantree).